The following is a 347-amino-acid chain: MKPPILIAILATVMTGTMIVMLSSHWLLIWIGFEMNMLAIIPILMKKFNPRAMEASTKYFLTQATASMLLMMGVTINLLYSGQWMISKVSNPAASTMMTIALTMKLGLSPFHFWVPEVTQGISLSSGMILLTWQKIAPMSVLYQISPSINTDLMTLVALASVLVGGWGGLNQTQLRKIMAYSSIAHMGWMAAIIIYNPTMMFLNLSLYILMTLSTFMLFMLSASTTTLSLSHTWNKIPLIASTILTLMLSLGGLPPLSGFIPKWMIIQELTKNDMIVVPTLMAITALLNLYFYMRLTYSTALTMFPSANNMKMKWQFEHTKKMTLLPPLIITSTMLLPIMPMMSILD.

10 helical membrane-spanning segments follow: residues 3–23, 25–45, 66–86, 111–131, 149–169, 178–198, 201–221, 237–257, 274–294, and 325–345; these read PPILIAILATVMTGTMIVMLS, HWLLIWIGFEMNMLAIIPILM, ASMLLMMGVTINLLYSGQWMI, FHFWVPEVTQGISLSSGMILL, INTDLMTLVALASVLVGGWGG, IMAYSSIAHMGWMAAIIIYNP, MFLNLSLYILMTLSTFMLFML, IPLIASTILTLMLSLGGLPPL, DMIVVPTLMAITALLNLYFYM, and LLPPLIITSTMLLPIMPMMSI.

This sequence belongs to the complex I subunit 2 family. In terms of assembly, core subunit of respiratory chain NADH dehydrogenase (Complex I) which is composed of 45 different subunits. Interacts with TMEM242.

Its subcellular location is the mitochondrion inner membrane. It carries out the reaction a ubiquinone + NADH + 5 H(+)(in) = a ubiquinol + NAD(+) + 4 H(+)(out). Core subunit of the mitochondrial membrane respiratory chain NADH dehydrogenase (Complex I) which catalyzes electron transfer from NADH through the respiratory chain, using ubiquinone as an electron acceptor. Essential for the catalytic activity and assembly of complex I. The polypeptide is NADH-ubiquinone oxidoreductase chain 2 (Vulpes vulpes (Red fox)).